Consider the following 466-residue polypeptide: MTSKIKSSNTLLTFDANEVTNIKLVWDIEELKNKDKEDKAHIKDEEEDEDGPVSFHPSFSHQIFNDEQVQGYEACKIDIYMGAGSLTSYIDTNYTLQSKNLTNVEGELLKVFSKQDPPISKQSFYKFIEEKEKSFKPIGKKIHEYTITDKESGEETEYEVYFGRITDQAVFRYHEKLQIFVLWYIDGSSYIWTDDPNWDIFFIFEKRIIDGEKRYGITGYSTIYNFYHHPEQTRARISQYLILPPYQRMGHGKYLFNSIHQYYKTNDGFYGPVYDVTIEDPADDFNLLRNYVDLKNIIDEKLFDNVILDLNANNKSVFEEIRKKLLVPHKQSKVCLEIYLFSKFLATPNSNPKYKEFRIAIKKRLYKQNIGDSEQIEKMKQQVAQENEDNLRLEQEELQELQDIENKKNGTNIKVAINTKELTTPSEPEKSKEEIEKDRLEEIIQLYKDLEENYHKTLSSLNLITK.

Residues 169 to 366 enclose the N-acetyltransferase domain; the sequence is AVFRYHEKLQ…FRIAIKKRLY (198 aa). Acetyl-CoA-binding positions include 240 to 242 and 247 to 253; these read YLI and QRMGHGK. E279 (proton donor/acceptor) is an active-site residue. Residues 372–459 are a coiled coil; that stretch reads DSEQIEKMKQ…LEENYHKTLS (88 aa).

This sequence belongs to the HAT1 family.

The enzyme catalyses L-lysyl-[protein] + acetyl-CoA = N(6)-acetyl-L-lysyl-[protein] + CoA + H(+). The protein is Histone acetyltransferase type B catalytic subunit DDB_G0275159 of Dictyostelium discoideum (Social amoeba).